The primary structure comprises 1125 residues: tRNA (34-2'-O)-methyltransferase regulator WDR6 (1125 aa).

Methionine 1 carries the N-acetylmethionine modification. 19 WD repeats span residues 53-97 (VKRV…VVKV), 105-143 (RELWRSGLWNMSDWIWDVRWIEGNVAVALGHNSVVLYDP), 147-189 (CMLQ…IWYP), 200-238 (APDRRVSGHVGVIFSMSYLESKGLLATASEDRSVRLWKV), 247-285 (RVQNIGHCFGHSARVWQVKLLENYLISAGEDCVCLVWSH), 289-327 (ILQAFRGHRGRGIRAIATHERQAWVVTGGDDSGIRLWHL), 335-376 (LGVS…LYDL), 381-422 (WEQL…VVPI), 425-470 (PTAA…ISAA), 476-520 (IFVK…LFPV), 559-598 (PVSTLHSLHGKQGVTSVTCHGGYLYSTGRDSSYFQLFVHG), 604-642 (VLRQKACRGMNWVAGLRMVPDGSMVILGFHANEFVVWSP), 645-684 (HEKLHIVNCGGGHRSWAFSDTEAAMAFTYLKDGEVMLYRA), 739-785 (LIDI…VWAV), 848-897 (RNKH…LFLL), 905-950 (HLLA…FWDL), 974-1016 (GTPS…VFTL), 1040-1077 (EEYSVPCAHAAHVTGVKILSPKLMVSASIDQRLTFWRL), and 1083-1125 (TFMN…NWYD).

It belongs to the WD repeat WDR6 family. As to quaternary structure, interacts with FTSJ1; the interaction is direct, and required for 2'-O-methylation of position 34 in substrate tRNAs. Interacts with IRS4. Interacts with STK11/LKB1.

It localises to the cytoplasm. In terms of biological role, together with methyltransferase FTSJ1, methylates the 2'-O-ribose of nucleotides at position 34 of the tRNA anticodon loop of substrate tRNAs. Required for the correct positioning of the substrate tRNA for methylation. Required to suppress amino acid starvation-induced autophagy. Enhances the STK11/LKB1-induced cell growth suppression activity. The protein is tRNA (34-2'-O)-methyltransferase regulator WDR6 (Wdr6) of Mus musculus (Mouse).